We begin with the raw amino-acid sequence, 500 residues long: Glycerol kinase (500 aa).

An ADP-binding site is contributed by threonine 15. Positions 15, 16, and 17 each coordinate ATP. Threonine 15 serves as a coordination point for sn-glycerol 3-phosphate. An ADP-binding site is contributed by arginine 19. Sn-glycerol 3-phosphate contacts are provided by arginine 85, glutamate 86, tyrosine 137, and aspartate 245. Positions 85, 86, 137, 245, and 246 each coordinate glycerol. ADP contacts are provided by threonine 267 and glycine 310. The ATP site is built by threonine 267, glycine 310, glutamine 314, and glycine 411. Residues glycine 411 and asparagine 415 each contribute to the ADP site.

The protein belongs to the FGGY kinase family.

The enzyme catalyses glycerol + ATP = sn-glycerol 3-phosphate + ADP + H(+). Its pathway is polyol metabolism; glycerol degradation via glycerol kinase pathway; sn-glycerol 3-phosphate from glycerol: step 1/1. With respect to regulation, inhibited by fructose 1,6-bisphosphate (FBP). In terms of biological role, key enzyme in the regulation of glycerol uptake and metabolism. Catalyzes the phosphorylation of glycerol to yield sn-glycerol 3-phosphate. This Aeromonas hydrophila subsp. hydrophila (strain ATCC 7966 / DSM 30187 / BCRC 13018 / CCUG 14551 / JCM 1027 / KCTC 2358 / NCIMB 9240 / NCTC 8049) protein is Glycerol kinase.